Here is a 315-residue protein sequence, read N- to C-terminus: MSQSLRIVFAGTPDFAARHLAALLSSEHEIIAVYTQPDRPAGRGKKLTASPVKTLALEHNVPVYQPENFKSDESKQQLAALNADLMVVVAYGLLLPKVVLDTPKLGCINVHGSILPRWRGAAPIQRSIWAGDSETGVTIMQMDVGLDTGDMLKIATLPIEASDTSASMYDKLAELGPQALLECLQEIAQGTAVAVKQDDALANYAHKLSKEEARINWNDEAAHIERCIRAFNPWPMSHFEVAENSIKVWQARVETRAVTQTPGTIIQADKSGIYVATGQDVLVLESLQIPGKKALPVQDILNARADWFSVGSQLS.

Residue 113–116 coordinates (6S)-5,6,7,8-tetrahydrofolate; sequence SILP.

This sequence belongs to the Fmt family.

The enzyme catalyses L-methionyl-tRNA(fMet) + (6R)-10-formyltetrahydrofolate = N-formyl-L-methionyl-tRNA(fMet) + (6S)-5,6,7,8-tetrahydrofolate + H(+). Functionally, attaches a formyl group to the free amino group of methionyl-tRNA(fMet). The formyl group appears to play a dual role in the initiator identity of N-formylmethionyl-tRNA by promoting its recognition by IF2 and preventing the misappropriation of this tRNA by the elongation apparatus. The polypeptide is Methionyl-tRNA formyltransferase (Vibrio cholerae serotype O1 (strain M66-2)).